A 436-amino-acid chain; its full sequence is Testican-3 (436 aa).

Residues 1–21 (MLKVSAVLCVCAAAWCSQSLA) form the signal peptide. Intrachain disulfides connect Cys-90-Cys-101, Cys-95-Cys-111, Cys-139-Cys-169, Cys-142-Cys-162, Cys-151-Cys-183, Cys-317-Cys-341, Cys-352-Cys-359, and Cys-361-Cys-380. The Kazal-like domain maps to 133-185 (GPILSTCKQCPVVYPSPVCGSDGHTYSFQCKLEYQACVLGKQISVKCEGHCPC). The Thyroglobulin type-1 domain maps to 314-380 (DPPCQTELSN…GSRINGVADC (67 aa)). O-linked (Xyl...) (glycosaminoglycan) serine glycans are attached at residues Ser-387 and Ser-392. The disordered stretch occupies residues 393–436 (GDFHEWTDDEDDEDDIMNDEDEIEDDDEDEGDDDDGGDDHDVYI). A compositionally biased stretch (acidic residues) spans 399–430 (TDDEDDEDDIMNDEDEIEDDDEDEGDDDDGGD).

In terms of processing, contains chondroitin sulfate and heparan sulfate O-linked oligosaccharides. As to expression, expressed in brain.

It localises to the secreted. The protein localises to the extracellular space. It is found in the extracellular matrix. May participate in diverse steps of neurogenesis. Inhibits the processing of pro-matrix metalloproteinase 2 (MMP-2) by MT1-MMP and MT3-MMP. May interfere with tumor invasion. The sequence is that of Testican-3 (SPOCK3) from Homo sapiens (Human).